The following is a 215-amino-acid chain: Large ribosomal subunit protein uL4 (215 aa).

Residues 46–72 are disordered; that stretch reads TAKSKNRAEVSGGGRKPWAQKGGGRAR. The segment covering 56-71 has biased composition (gly residues); sequence SGGGRKPWAQKGGGRA.

This sequence belongs to the universal ribosomal protein uL4 family. Part of the 50S ribosomal subunit.

In terms of biological role, one of the primary rRNA binding proteins, this protein initially binds near the 5'-end of the 23S rRNA. It is important during the early stages of 50S assembly. It makes multiple contacts with different domains of the 23S rRNA in the assembled 50S subunit and ribosome. Forms part of the polypeptide exit tunnel. In Helicobacter pylori (strain J99 / ATCC 700824) (Campylobacter pylori J99), this protein is Large ribosomal subunit protein uL4.